Here is a 285-residue protein sequence, read N- to C-terminus: Bifunctional protein FolD (285 aa).

Residues 163 to 165 (GRS), serine 188, and alanine 231 each bind NADP(+).

This sequence belongs to the tetrahydrofolate dehydrogenase/cyclohydrolase family. As to quaternary structure, homodimer.

It catalyses the reaction (6R)-5,10-methylene-5,6,7,8-tetrahydrofolate + NADP(+) = (6R)-5,10-methenyltetrahydrofolate + NADPH. It carries out the reaction (6R)-5,10-methenyltetrahydrofolate + H2O = (6R)-10-formyltetrahydrofolate + H(+). The protein operates within one-carbon metabolism; tetrahydrofolate interconversion. In terms of biological role, catalyzes the oxidation of 5,10-methylenetetrahydrofolate to 5,10-methenyltetrahydrofolate and then the hydrolysis of 5,10-methenyltetrahydrofolate to 10-formyltetrahydrofolate. The polypeptide is Bifunctional protein FolD (Oenococcus oeni (strain ATCC BAA-331 / PSU-1)).